Here is an 829-residue protein sequence, read N- to C-terminus: DNA ligase (829 aa).

The disordered stretch occupies residues 1–23; sequence MPAQTSRARPVEEMTAAQAREAH. NAD(+)-binding positions include 47 to 51, 96 to 97, and glutamate 130; these read DAEYD and SL. The N6-AMP-lysine intermediate role is filled by lysine 132. Residues arginine 153, glutamate 190, lysine 306, and lysine 330 each coordinate NAD(+). Residues cysteine 453, cysteine 456, cysteine 477, and cysteine 483 each contribute to the Zn(2+) site. In terms of domain architecture, BRCT spans 750–829; sequence AAAAVFSGQT…AEWLAMVEAA (80 aa).

It belongs to the NAD-dependent DNA ligase family. LigA subfamily. Mg(2+) serves as cofactor. It depends on Mn(2+) as a cofactor.

The catalysed reaction is NAD(+) + (deoxyribonucleotide)n-3'-hydroxyl + 5'-phospho-(deoxyribonucleotide)m = (deoxyribonucleotide)n+m + AMP + beta-nicotinamide D-nucleotide.. Functionally, DNA ligase that catalyzes the formation of phosphodiester linkages between 5'-phosphoryl and 3'-hydroxyl groups in double-stranded DNA using NAD as a coenzyme and as the energy source for the reaction. It is essential for DNA replication and repair of damaged DNA. This chain is DNA ligase, found in Methylobacterium nodulans (strain LMG 21967 / CNCM I-2342 / ORS 2060).